The sequence spans 306 residues: MLNYVLKRLLGLIPTLLIVAVLVFLFVHLLPGDPARLIAGPEADAQVIALVRQQLGLDQPLHVQFWHYITHVLQGDFGTSMVSRRPVSEEIASRFLPTLWLTITSMIWAVLFGMAIGIAAAVWRNRWPDRLGMTLAVTGISFPAFALGMLLMQIFSVDLGWLPTVGADSWQHYILPSLTLGAAVASVMARFTRSSFVDVLSEDYMRTARAKGVSETWVVLKHGLRNAMIPVVTMMGLQFGFLLGGSIVVEKVFNWPGLGRLLVDSVDMRDYPVIQAEVLLFSLEFILINLVVDVLYAAINPAIRYK.

At 1-8 (MLNYVLKR) the chain is on the cytoplasmic side. Residues 9–29 (LLGLIPTLLIVAVLVFLFVHL) form a helical membrane-spanning segment. Residues 30 to 102 (LPGDPARLIA…SRFLPTLWLT (73 aa)) are Periplasmic-facing. The ABC transmembrane type-1 domain occupies 95–292 (FLPTLWLTIT…LEFILINLVV (198 aa)). A helical membrane pass occupies residues 103 to 123 (ITSMIWAVLFGMAIGIAAAVW). Residues 124–134 (RNRWPDRLGMT) are Cytoplasmic-facing. The chain crosses the membrane as a helical span at residues 135–155 (LAVTGISFPAFALGMLLMQIF). The Periplasmic segment spans residues 156-168 (SVDLGWLPTVGAD). Residues 169–189 (SWQHYILPSLTLGAAVASVMA) traverse the membrane as a helical segment. The Cytoplasmic portion of the chain corresponds to 190–228 (RFTRSSFVDVLSEDYMRTARAKGVSETWVVLKHGLRNAM). Residues 229 to 249 (IPVVTMMGLQFGFLLGGSIVV) form a helical membrane-spanning segment. Over 250–278 (EKVFNWPGLGRLLVDSVDMRDYPVIQAEV) the chain is Periplasmic. The helical transmembrane segment at 279 to 299 (LLFSLEFILINLVVDVLYAAI) threads the bilayer. Residues 300–306 (NPAIRYK) are Cytoplasmic-facing.

It belongs to the binding-protein-dependent transport system permease family. The complex is composed of two ATP-binding proteins (GsiA), two transmembrane proteins (GsiC and GsiD) and a solute-binding protein (GsiB).

It is found in the cell inner membrane. In terms of biological role, part of the ABC transporter complex GsiABCD involved in glutathione import. Probably responsible for the translocation of the substrate across the membrane. The protein is Glutathione transport system permease protein GsiC of Salmonella typhimurium (strain LT2 / SGSC1412 / ATCC 700720).